Consider the following 574-residue polypeptide: MAALAVNKPGAGVDSGRQGSRGTAVVKVLECGVCEDVFSLQGDKVPRLLLCGHTVCHDCLTRLPLHGRAIRCPFDRQVTDLGDSGVWGLKKNFALLELLERLQNGHIGQYGAAEEAIGTSGESIIRCDEDEAHVASVYCTVCATHLCSDCSQVTHSTKTLAKHRRVPLADKPHEKTMCCQHQVHAIEFVCLEEGCQTSPLMCCVCKEYGKHQGHKHSVLEPEANQIRASILDMAHCIRTFTEEISDYSRKLVGIVQHIEGGEQIVEDGIGMAHTEHVPGTAENARSCVRAYFSDLHETLCRQEEMALSVVDAHVREKLIWLRQQQEDMTILLSQVSTACLHCEKTLQQDDCRVVLAKQEITRLLETLQKQQQQFTEVADHIQLDASIPVTFTKDNRVHIGPKMEIRVVTLGLDGAGKTTILFKLKQDEFMQPIPTIGFNVETVEYKNLKFTIWDVGGKHKLRPLWKHYYLNTQAVVFVVDSSHRDRISEAHSELAKLLTEKELRDALLLIFANKQDVAGALSVEEITELLSLHKLCCGRSWYIQGCDARSGMGLYEGLDWLSRQLVAAGVLDVA.

The RING-type; degenerate zinc finger occupies 31-76 (CGVCEDVFSLQGDKVPRLLLCGHTVCHDCLTRLPLHGRAIRCPFDR). The B box-type; degenerate zinc finger occupies 122 to 168 (ESIIRCDEDEAHVASVYCTVCATHLCSDCSQVTHSTKTLAKHRRVPL). The stretch at 352–379 (RVVLAKQEITRLLETLQKQQQQFTEVAD) forms a coiled coil. An ARF-like region spans residues 390-574 (TFTKDNRVHI…LVAAGVLDVA (185 aa)). Residues 411–418 (GLDGAGKT), 454–458 (DVGGK), and 513–516 (NKQD) contribute to the GTP site.

The protein in the C-terminal section; belongs to the small GTPase superfamily. Arf family. Homodimer. Interacts with PSCD1. Interacts with UBE2D2. Interacts with TBK1 (via N-terminal kinase domain) and p62/SQSTM1.

It is found in the cytoplasm. The protein localises to the endomembrane system. The protein resides in the golgi apparatus membrane. Its subcellular location is the lysosome membrane. It carries out the reaction S-ubiquitinyl-[E2 ubiquitin-conjugating enzyme]-L-cysteine + [acceptor protein]-L-lysine = [E2 ubiquitin-conjugating enzyme]-L-cysteine + N(6)-ubiquitinyl-[acceptor protein]-L-lysine.. The protein operates within protein modification; protein ubiquitination. Its function is as follows. Acts as an E3 ubiquitin-protein ligase. Plays an essential role in autophagy activation during viral infection. Mechanistically, activates TANK-binding kinase 1/TBK1 by facilitating its dimerization and ability to phosphorylate the selective autophagy receptor SQSTM1. In order to achieve this function, TRIM23 mediates 'Lys-27'-linked auto-ubiquitination of its ADP-ribosylation factor (ARF) domain to induce its GTPase activity and its recruitment to autophagosomes. The chain is E3 ubiquitin-protein ligase TRIM23 (Trim23) from Mus musculus (Mouse).